The following is a 396-amino-acid chain: Elongation factor Tu 1 (396 aa).

One can recognise a tr-type G domain in the interval K10–E206. A G1 region spans residues G19 to T26. G19 to T26 is a GTP binding site. Position 26 (T26) interacts with Mg(2+). Positions G60–A64 are G2. The tract at residues D81 to G84 is G3. Residues D81 to H85 and N136 to D139 each bind GTP. The interval N136–D139 is G4. The G5 stretch occupies residues S174–L176.

This sequence belongs to the TRAFAC class translation factor GTPase superfamily. Classic translation factor GTPase family. EF-Tu/EF-1A subfamily. Monomer.

It localises to the cytoplasm. It catalyses the reaction GTP + H2O = GDP + phosphate + H(+). GTP hydrolase that promotes the GTP-dependent binding of aminoacyl-tRNA to the A-site of ribosomes during protein biosynthesis. The polypeptide is Elongation factor Tu 1 (Halorhodospira halophila (strain DSM 244 / SL1) (Ectothiorhodospira halophila (strain DSM 244 / SL1))).